The chain runs to 420 residues: Serine/threonine-protein phosphatase 4 regulatory subunit 2-A (420 aa).

Residues 157–420 (GNTSAFPDRN…ETADDNMEQD (264 aa)) form a disordered region. Positions 182–195 (SLSSNVATNGLPDS) are enriched in polar residues. The segment covering 196-210 (TESKEQASEQSERTV) has biased composition (basic and acidic residues). Residues 212–224 (ESSASEAESHSGA) are compositionally biased toward low complexity. Residues 229–250 (HRDDEDATHAETHEAKRLKFDK) show a composition bias toward basic and acidic residues. Residues 251–266 (EEEEEEDDEEEDEDGD) show a composition bias toward acidic residues. Residues 267–276 (EIKKELDEPH) show a composition bias toward basic and acidic residues. The span at 278–296 (PCTSVAESSSDVPQSSTDV) shows a compositional bias: polar residues. Over residues 318–332 (GVDRSTSEDSPDPSH) the composition is skewed to basic and acidic residues. Residues 346–364 (AEEEEEEESAEAQETEETN) show a composition bias toward acidic residues. The span at 368–394 (SSSSNNSSDEGVSSAETPSASPSSSTE) shows a compositional bias: low complexity. The segment covering 411 to 420 (ETADDNMEQD) has biased composition (acidic residues).

The protein belongs to the PPP4R2 family. Serine/threonine-protein phosphatase 4 (PP4) occurs in different assemblies of the catalytic and one or more regulatory subunits.

Its function is as follows. Regulatory subunit of serine/threonine-protein phosphatase 4 (PP4C). The polypeptide is Serine/threonine-protein phosphatase 4 regulatory subunit 2-A (ppp4r2a) (Danio rerio (Zebrafish)).